The chain runs to 95 residues: Large ribosomal subunit protein bL25 (95 aa).

It belongs to the bacterial ribosomal protein bL25 family. As to quaternary structure, part of the 50S ribosomal subunit; part of the 5S rRNA/L5/L18/L25 subcomplex. Contacts the 5S rRNA. Binds to the 5S rRNA independently of L5 and L18.

This is one of the proteins that binds to the 5S RNA in the ribosome where it forms part of the central protuberance. In Shewanella halifaxensis (strain HAW-EB4), this protein is Large ribosomal subunit protein bL25.